The following is a 59-amino-acid chain: Large ribosomal subunit protein uL30 (59 aa).

Belongs to the universal ribosomal protein uL30 family. In terms of assembly, part of the 50S ribosomal subunit.

The protein is Large ribosomal subunit protein uL30 of Alkaliphilus metalliredigens (strain QYMF).